Here is a 161-residue protein sequence, read N- to C-terminus: DNA-directed RNA polymerase 18 kDa subunit (161 aa).

The protein belongs to the poxviridae DNA-directed RNA polymerase 18 kDa subunit family. The DNA-dependent RNA polymerase used for intermediate and late genes expression consists of eight subunits Rpo30/OPG66, Rpo7/OPG90, Rpo22/OPG103, Rpo147/OPG105, Rpo18/OPG119, Rpo19/OPG131, Rpo132/OPG151 and Rpo35/OPG156. The same holoenzyme, with the addition of the transcription-specificity factor OPG109, is used for early gene expression.

Its subcellular location is the virion. It catalyses the reaction RNA(n) + a ribonucleoside 5'-triphosphate = RNA(n+1) + diphosphate. In terms of biological role, part of the DNA-dependent RNA polymerase which catalyzes the transcription of viral DNA into RNA using the four ribonucleoside triphosphates as substrates. Responsible for the transcription of early, intermediate and late genes. DNA-dependent RNA polymerase associates with the early transcription factor (ETF), itself composed of OPG118 and OPG133, thereby allowing the early genes transcription. Late transcription, and probably also intermediate transcription, require newly synthesized RNA polymerase. The chain is DNA-directed RNA polymerase 18 kDa subunit (OPG119) from Homo sapiens (Human).